We begin with the raw amino-acid sequence, 595 residues long: Glutamyl-tRNA(Gln) amidotransferase subunit B, mitochondrial (595 aa).

The transit peptide at 1 to 114 (MPRLWYSRYL…RAPTSTVAEP (114 aa)) directs the protein to the mitochondrion. A disordered region spans residues 59–78 (KEEAKRSKSQSRNGRGKKQV).

Belongs to the GatB/GatE family. GatB subfamily. In terms of assembly, subunit of the heterotrimeric GatCAB amidotransferase (AdT) complex, composed of A, B and C subunits.

Its subcellular location is the mitochondrion. It carries out the reaction L-glutamyl-tRNA(Gln) + L-glutamine + ATP + H2O = L-glutaminyl-tRNA(Gln) + L-glutamate + ADP + phosphate + H(+). Allows the formation of correctly charged Gln-tRNA(Gln) through the transamidation of misacylated Glu-tRNA(Gln) in the mitochondria. The reaction takes place in the presence of glutamine and ATP through an activated gamma-phospho-Glu-tRNA(Gln). The protein is Glutamyl-tRNA(Gln) amidotransferase subunit B, mitochondrial of Talaromyces stipitatus (strain ATCC 10500 / CBS 375.48 / QM 6759 / NRRL 1006) (Penicillium stipitatum).